A 217-amino-acid polypeptide reads, in one-letter code: Octanoyltransferase (217 aa).

The BPL/LPL catalytic domain occupies D32–Q207. Substrate is bound by residues R71–H78, S138–G140, and G151–A153. The active-site Acyl-thioester intermediate is C169.

The protein belongs to the LipB family.

The protein resides in the cytoplasm. It catalyses the reaction octanoyl-[ACP] + L-lysyl-[protein] = N(6)-octanoyl-L-lysyl-[protein] + holo-[ACP] + H(+). The protein operates within protein modification; protein lipoylation via endogenous pathway; protein N(6)-(lipoyl)lysine from octanoyl-[acyl-carrier-protein]: step 1/2. Functionally, catalyzes the transfer of endogenously produced octanoic acid from octanoyl-acyl-carrier-protein onto the lipoyl domains of lipoate-dependent enzymes. Lipoyl-ACP can also act as a substrate although octanoyl-ACP is likely to be the physiological substrate. This is Octanoyltransferase from Pseudoalteromonas translucida (strain TAC 125).